We begin with the raw amino-acid sequence, 556 residues long: Undecaprenyl phosphate-alpha-4-amino-4-deoxy-L-arabinose arabinosyl transferase (556 aa).

Helical transmembrane passes span 88 to 108, 116 to 136, 179 to 199, 207 to 227, 258 to 278, 296 to 316, 319 to 339, 355 to 375, 384 to 404, and 410 to 430; these read FASV…AMML, LLAA…TYSV, FMTK…PVAL, LLLF…PWAL, APFW…LALL, FFLL…KGKL, YILP…SGLA, IVFG…IIVP, LTII…AVSL, and WGYL…GSIP.

The protein belongs to the glycosyltransferase 83 family.

The protein localises to the cell inner membrane. The catalysed reaction is 4-amino-4-deoxy-alpha-L-arabinopyranosyl di-trans,octa-cis-undecaprenyl phosphate + lipid IVA = lipid IIA + di-trans,octa-cis-undecaprenyl phosphate.. It functions in the pathway lipopolysaccharide metabolism; 4-amino-4-deoxy-beta-L-arabinose-lipid A biosynthesis. In terms of biological role, catalyzes the transfer of the L-Ara4N moiety of the glycolipid undecaprenyl phosphate-alpha-L-Ara4N to lipid A. The modified arabinose is attached to lipid A and is required for resistance to polymyxin and cationic antimicrobial peptides. This is Undecaprenyl phosphate-alpha-4-amino-4-deoxy-L-arabinose arabinosyl transferase from Pectobacterium atrosepticum (strain SCRI 1043 / ATCC BAA-672) (Erwinia carotovora subsp. atroseptica).